A 299-amino-acid chain; its full sequence is F-actin-capping protein subunit alpha-3 (299 aa).

S290 carries the phosphoserine modification.

The protein belongs to the F-actin-capping protein alpha subunit family. Component of the F-actin capping complex, composed of a heterodimer of an alpha and a beta subunit. Component of the WASH complex, composed of F-actin-capping protein subunit alpha (CAPZA1, CAPZA2 or CAPZA3), F-actin-capping protein subunit beta (CAPZB), WASH (WASHC1, WASH2P, WASH3P, WASH4P, WASH5P or WASH6P), WASHC2 (WASHC2A or WASHC2C), WASHC3, WASHC4 and WASHC5. In terms of tissue distribution, expressed exclusively in testis and sperm. Highest expression is found in the neck region of ejaculated sperm with lower levels found in the tail and postacrosome region.

It localises to the cytoplasm. Its subcellular location is the cytoskeleton. Its function is as follows. F-actin-capping proteins bind in a Ca(2+)-independent manner to the fast growing ends of actin filaments (barbed end) thereby blocking the exchange of subunits at these ends. Unlike other capping proteins (such as gelsolin and severin), these proteins do not sever actin filaments. May play a role in the morphogenesis of spermatid. The protein is F-actin-capping protein subunit alpha-3 (CAPZA3) of Homo sapiens (Human).